Consider the following 308-residue polypeptide: Acetylglutamate kinase (308 aa).

Residues 64-65 (GG), Arg86, and Asn192 each bind substrate.

The protein belongs to the acetylglutamate kinase family. ArgB subfamily.

The protein resides in the cytoplasm. The catalysed reaction is N-acetyl-L-glutamate + ATP = N-acetyl-L-glutamyl 5-phosphate + ADP. Its pathway is amino-acid biosynthesis; L-arginine biosynthesis; N(2)-acetyl-L-ornithine from L-glutamate: step 2/4. Functionally, catalyzes the ATP-dependent phosphorylation of N-acetyl-L-glutamate. The polypeptide is Acetylglutamate kinase (Myxococcus xanthus (strain DK1622)).